Reading from the N-terminus, the 343-residue chain is MAGLKNTPYNAVHWSQLAPEEQIRFWEDYEAGRATTFLVEPERKRTKRRRGEHSTKPKCENPSWYRPERYKALKGQLGHAYNRLVKKDPVTGEQSLRMRMSRHPFYVQKRTFVGRKYAFRPEKQRLLDAIWPVLVSFSDAGTHTVGMSVTRLAEEISPKDSEGHVIPELEVTVSRLSRLLAEQVRFGVLGVSEETMWDREHRQRLPRYVWITPAGWQMLGVDMVKLHEQQQKRLRESEIRQQLIREGVLREDEDISVHAARKRWYLQRSQDALKKRREKAAASKRANRLKKLPVDQQIYEMAEYLRKRLPPDEAYFCSDDHLKRLAIRELRQLELTLAAPPPH.

A disordered region spans residues 42-61 (ERKRTKRRRGEHSTKPKCEN).

Its function is as follows. Probably functions as an initiator for the IncI1 ColIb-P9 replicon. In Escherichia coli, this protein is Replication initiation protein (repZ).